A 711-amino-acid chain; its full sequence is Triacylglycerol hydrolase DDHD2 (711 aa).

Residues 1 to 24 (MSSVQSQQEQLSQSDPSPSPNSCS) form a disordered region. In terms of domain architecture, WWE spans 30 to 112 (DMDAGSLYEP…WDELASEVRR (83 aa)). Ser351 (nucleophile) is an active-site residue. An SAM domain is found at 385–448 (GDTPTLEEDL…NYFSTRKNSM (64 aa)). The residue at position 447 (Ser447) is a Phosphoserine. 2 disordered regions span residues 449–470 (GIKRPAPQPASGANIPKESEFC) and 609–638 (LQASETPEETEAEPESTSEKPSDVNTEETS). Residues 495–700 (LIYKPEIFFA…VLLVLKEIYQ (206 aa)) form the DDHD domain. The segment covering 614–624 (TPEETEAEPES) has biased composition (acidic residues).

The protein belongs to the PA-PLA1 family. Forms homooligomers and, to a much smaller extent, heterooligomers with DDHD1. As to expression, widely expressed (at protein level).

It localises to the cytoplasm. It is found in the cytosol. The protein resides in the endoplasmic reticulum-Golgi intermediate compartment. Its subcellular location is the golgi apparatus. The protein localises to the cis-Golgi network. It catalyses the reaction a triacylglycerol + H2O = a diacylglycerol + a fatty acid + H(+). The enzyme catalyses a diacylglycerol + H2O = a monoacylglycerol + a fatty acid + H(+). It carries out the reaction a 1,3-diacylglycerol + H2O = a 1-acylglycerol + a fatty acid + H(+). The catalysed reaction is a 1-acylglycerol + H2O = glycerol + a fatty acid + H(+). It catalyses the reaction 1,2,3-tri-(9Z-octadecenoyl)-glycerol + H2O = di-(9Z)-octadecenoylglycerol + (9Z)-octadecenoate + H(+). The enzyme catalyses di-(9Z)-octadecenoylglycerol + H2O = (9Z-octadecenoyl)-glycerol + (9Z)-octadecenoate + H(+). It carries out the reaction 1,3-di-(9Z-octadecenoyl)-glycerol + H2O = 1-(9Z-octadecenoyl)-glycerol + (9Z)-octadecenoate + H(+). The catalysed reaction is trihexadecanoylglycerol + H2O = dihexadecanoylglycerol + hexadecanoate + H(+). It catalyses the reaction 1,2-di-(9Z-octadecenoyl)-sn-glycero-3-phosphocholine + H2O = (9Z-octadecenoyl)-sn-glycero-3-phosphocholine + (9Z)-octadecenoate + H(+). The enzyme catalyses 1-(9Z-octadecenoyl)-glycerol + H2O = glycerol + (9Z)-octadecenoate + H(+). It carries out the reaction 1,2-di-(9Z-octadecenoyl)-sn-glycero-3-phosphate + H2O = 2-(9Z-octadecenoyl)-sn-glycero-3-phosphate + (9Z)-octadecenoate + H(+). The catalysed reaction is 1-hexadecanoyl-2-(9Z-octadecenoyl)-sn-glycero-3-phosphate + H2O = 2-(9Z-octadecenoyl)-sn-glycero-3-phosphate + hexadecanoate + H(+). It catalyses the reaction 1-hexadecanoyl-2-(9Z-octadecenoyl)-sn-glycero-3-phosphoethanolamine + H2O = 2-(9Z-octadecenoyl)-sn-glycero-3-phosphoethanolamine + hexadecanoate + H(+). The enzyme catalyses 1-hexadecanoyl-2-(9Z-octadecenoyl)-sn-glycero-3-phospho-L-serine + H2O = 2-(9Z-octadecenoyl)-sn-glycero-3-phospho-L-serine + hexadecanoate + H(+). It carries out the reaction 1-hexadecanoyl-2-(9Z-octadecenoyl)-sn-glycero-3-phosphocholine + H2O = 2-(9Z-octadecenoyl)-sn-glycero-3-phosphocholine + hexadecanoate + H(+). In terms of biological role, diacylglycerol (DAG) and triacylglycerol (TAG) lipase required for proper lipid homeostasis in the central nervous system. It cooperates with PNPLA2/ATGL in neuronal TAG catabolism and hydrolyzes sn-1,3 DAG downstream of PNPLA2/ATGL. In vitro, it also acts as a phospholipase that hydrolyzes preferentially phosphatidic acids, including 1,2-dioleoyl-sn-phosphatidic acid, phosphatidylcholine and phosphatidylethanolamine. Specifically binds to phosphatidylinositol 3-phosphate (PI(3)P), phosphatidylinositol 4-phosphate (PI(4)P), phosphatidylinositol 5-phosphate (PI(5)P) and possibly phosphatidylinositol 4,5-bisphosphate (PI(4,5)P2). May be involved in the maintenance of the endoplasmic reticulum and/or Golgi structures. May regulate the transport between Golgi apparatus and plasma membrane. The protein is Triacylglycerol hydrolase DDHD2 of Homo sapiens (Human).